Reading from the N-terminus, the 200-residue chain is Recombination protein RecR (200 aa).

The C4-type zinc-finger motif lies at Cys-57 to Cys-72. The 96-residue stretch at Thr-80–Pro-175 folds into the Toprim domain.

It belongs to the RecR family.

Its function is as follows. May play a role in DNA repair. It seems to be involved in an RecBC-independent recombinational process of DNA repair. It may act with RecF and RecO. This chain is Recombination protein RecR, found in Pseudomonas entomophila (strain L48).